Here is a 424-residue protein sequence, read N- to C-terminus: 23S rRNA (uracil(1939)-C(5))-methyltransferase RlmD (424 aa).

In terms of domain architecture, TRAM spans 1 to 56; it reads MEKFPAVTVFDLDYQGRGVAKIDGQVVFIEGALPDETVTFCKTSAKKQFIEAVVDE. 4 residues coordinate [4Fe-4S] cluster: Cys69, Cys75, Cys78, and Cys155. S-adenosyl-L-methionine-binding residues include Gln255, Phe284, Asn289, Glu305, Asp333, and Asp354. Cys380 functions as the Nucleophile in the catalytic mechanism.

The protein belongs to the class I-like SAM-binding methyltransferase superfamily. RNA M5U methyltransferase family. RlmD subfamily.

It catalyses the reaction uridine(1939) in 23S rRNA + S-adenosyl-L-methionine = 5-methyluridine(1939) in 23S rRNA + S-adenosyl-L-homocysteine + H(+). Its function is as follows. Catalyzes the formation of 5-methyl-uridine at position 1939 (m5U1939) in 23S rRNA. This is 23S rRNA (uracil(1939)-C(5))-methyltransferase RlmD from Dichelobacter nodosus (strain VCS1703A).